The chain runs to 406 residues: LIM/homeobox protein Lhx1 (406 aa).

2 LIM zinc-binding domains span residues 4–54 (CAGC…CKND) and 63–117 (CAGC…CKED). Disordered regions lie at residues 128–189 (NSLH…TIKA) and 293–374 (YDFF…EVFG). A compositionally biased stretch (low complexity) spans 137-148 (SDPSLSPDSQDP). The span at 151 to 167 (DDAKDSESANVSDKEGG) shows a compositional bias: basic and acidic residues. The residue at position 162 (S162) is a Phosphoserine. A DNA-binding region (homeobox) is located at residues 180–239 (RRGPRTTIKAKQLETLKAAFAATPKPTRHIREQLAQETGLNMRVIQVWFQNRRSKERRMK). Residues 315 to 327 (PSSGPSGTPLGGL) show a composition bias toward low complexity. The segment covering 352–362 (GDSPSPEPSLP) has biased composition (pro residues).

As to quaternary structure, interacts with LDB1 via the tandem LIM domains.

The protein localises to the nucleus. Its function is as follows. Potential transcription factor. May play a role in early mesoderm formation and later in lateral mesoderm differentiation and neurogenesis. This chain is LIM/homeobox protein Lhx1 (LHX1), found in Saimiri boliviensis boliviensis (Bolivian squirrel monkey).